We begin with the raw amino-acid sequence, 199 residues long: Recombination protein RecR (199 aa).

A C4-type zinc finger spans residues 57–72 (CTVCGHITDIDPCAIC). The Toprim domain occupies 80–176 (TVVCVVQDSR…RVTRLAHGLP (97 aa)).

The protein belongs to the RecR family.

Functionally, may play a role in DNA repair. It seems to be involved in an RecBC-independent recombinational process of DNA repair. It may act with RecF and RecO. In Exiguobacterium sp. (strain ATCC BAA-1283 / AT1b), this protein is Recombination protein RecR.